Reading from the N-terminus, the 118-residue chain is UPF0344 protein RBAM_010920 (118 aa).

4 consecutive transmembrane segments (helical) span residues 4–24 (WHIT…GLYG), 33–53 (ITHM…AELF), 62–82 (EYAG…MLVI), and 93–113 (LWIG…HLPI).

It belongs to the UPF0344 family.

The protein resides in the cell membrane. The polypeptide is UPF0344 protein RBAM_010920 (Bacillus velezensis (strain DSM 23117 / BGSC 10A6 / LMG 26770 / FZB42) (Bacillus amyloliquefaciens subsp. plantarum)).